We begin with the raw amino-acid sequence, 177 residues long: Voltage-dependent L-type calcium channel subunit alpha-1C (177 aa).

The chain crosses the membrane as a helical span at residues 27–45; sequence ITFFRLFRVMRLVKLLSRG. Residues 64–84 form a helical membrane-spanning segment; the sequence is YVALLIVMLFFIYAVIGMQVF. An N-linked (GlcNAc...) asparagine glycan is attached at Asn-90. The pore-forming intramembrane region spans 107–125; the sequence is AVLLLFRCATGEAWQEIML. Positions 116–119 match the Selectivity filter of repeat IV motif; the sequence is TGEA. A disulfide bridge links Cys-133 with Cys-149. Asn-141 is a glycosylation site (N-linked (GlcNAc...) asparagine). Residues 154–177 traverse the membrane as a helical segment; it reads AVFYFISFYMLCAFLIIDLFVAVI.

It belongs to the calcium channel alpha-1 subunit (TC 1.A.1.11) family. CACNA1C subfamily. Component of a calcium channel complex consisting of a pore-forming alpha subunit (CACNA1C) and ancillary beta, gamma and delta subunits. The channel complex contains alpha, beta, gamma and delta subunits in a 1:1:1:1 ratio, i.e. it contains only one of each type of subunit. CACNA1C channel activity is modulated by ancillary subunits, such as CACNB2, CACNB3, CACNA2D1 and CACNA2D4. In terms of processing, phosphorylation by PKA activates the channel.

The protein resides in the cell membrane. It localises to the perikaryon. Its subcellular location is the postsynaptic density membrane. The protein localises to the cell projection. It is found in the dendrite. The protein resides in the sarcolemma. It localises to the T-tubule. It carries out the reaction Ca(2+)(in) = Ca(2+)(out). Inhibited by dihydropyridines (DHP), such as isradipine. Channel activity is regulated by Ca(2+) and calmodulin. Its function is as follows. Pore-forming, alpha-1C subunit of the voltage-gated calcium channel that gives rise to L-type calcium currents. Mediates influx of calcium ions into the cytoplasm, and thereby triggers calcium release from the sarcoplasm. Plays an important role in excitation-contraction coupling in the heart. Required for normal heart development and normal regulation of heart rhythm. Required for normal contraction of smooth muscle cells in blood vessels and in the intestine. Essential for normal blood pressure regulation via its role in the contraction of arterial smooth muscle cells. Long-lasting (L-type) calcium channels belong to the 'high-voltage activated' (HVA) group. The sequence is that of Voltage-dependent L-type calcium channel subunit alpha-1C (CACNA1C) from Gallus gallus (Chicken).